The sequence spans 486 residues: MTRIKLSYFTIGLVALLLALALWPNIPWRNGQEGQLDQIKARGELRVSTISSPLIYSTEKDTPSGFDYELAKRFADYLGVKLVIIPHHNIDDLFDALDNDDTDLLAAGLIYNRERLNRARTGPAYYSVSQQLVYRLGSPRPKSFSDLKGQVVVASGSAHMTTLKRLKQTKYPELNWSSSVDKSGKELLEQVAEGKLDYTLGDSATIALLQRIHPQLAVAFDVTDEEPVTWYFKQSDDDSLYAAMLDFYSEMVEDGSLARLEEKYLGHVGSFDYVDTKTFLSAIDNVLPSYQHLFEKHAGDIDWKLLAVIAYQESHWNPQATSPTGVRGLMMLTRATADGLGVKDRVDPEESIRGGAIYLQRLMKKLPETIPEDERIWFALAAYNLGYGHMLDARRLTKNQNGNPDSWVDVKMRLPMLSQKRYYPSTTYGYARGHEAYNYVENIRRYQVSLVGYLQEKEKKAAQHAAIEAELGKSNPVVGPGWSIGD.

Positions 1–21 (MTRIKLSYFTIGLVALLLALA) are cleaved as a signal peptide. Positions 22–268 (LWPNIPWRNG…RLEEKYLGHV (247 aa)) are non-LT domain. An LT domain region spans residues 269-486 (GSFDYVDTKT…VVGPGWSIGD (218 aa)). Residue glutamate 313 is part of the active site.

It in the N-terminal section; belongs to the bacterial solute-binding protein 3 family. This sequence in the C-terminal section; belongs to the transglycosylase Slt family.

The protein resides in the cell outer membrane. The enzyme catalyses Exolytic cleavage of the (1-&gt;4)-beta-glycosidic linkage between N-acetylmuramic acid (MurNAc) and N-acetylglucosamine (GlcNAc) residues in peptidoglycan, from either the reducing or the non-reducing ends of the peptidoglycan chains, with concomitant formation of a 1,6-anhydrobond in the MurNAc residue.. In terms of biological role, murein-degrading enzyme that degrades murein glycan strands and insoluble, high-molecular weight murein sacculi, with the concomitant formation of a 1,6-anhydromuramoyl product. Lytic transglycosylases (LTs) play an integral role in the metabolism of the peptidoglycan (PG) sacculus. Their lytic action creates space within the PG sacculus to allow for its expansion as well as for the insertion of various structures such as secretion systems and flagella. This chain is Membrane-bound lytic murein transglycosylase F, found in Yersinia pestis bv. Antiqua (strain Antiqua).